The sequence spans 361 residues: Phosphoserine aminotransferase (361 aa).

Arginine 42 provides a ligand contact to L-glutamate. Residues alanine 76–threonine 77, tryptophan 102, threonine 152, aspartate 172, and glutamine 195 each bind pyridoxal 5'-phosphate. Lysine 196 bears the N6-(pyridoxal phosphate)lysine mark. Asparagine 237–threonine 238 contributes to the pyridoxal 5'-phosphate binding site.

The protein belongs to the class-V pyridoxal-phosphate-dependent aminotransferase family. SerC subfamily. Homodimer. It depends on pyridoxal 5'-phosphate as a cofactor.

The protein localises to the cytoplasm. It catalyses the reaction O-phospho-L-serine + 2-oxoglutarate = 3-phosphooxypyruvate + L-glutamate. It carries out the reaction 4-(phosphooxy)-L-threonine + 2-oxoglutarate = (R)-3-hydroxy-2-oxo-4-phosphooxybutanoate + L-glutamate. It functions in the pathway amino-acid biosynthesis; L-serine biosynthesis; L-serine from 3-phospho-D-glycerate: step 2/3. Its pathway is cofactor biosynthesis; pyridoxine 5'-phosphate biosynthesis; pyridoxine 5'-phosphate from D-erythrose 4-phosphate: step 3/5. Functionally, catalyzes the reversible conversion of 3-phosphohydroxypyruvate to phosphoserine and of 3-hydroxy-2-oxo-4-phosphonooxybutanoate to phosphohydroxythreonine. The sequence is that of Phosphoserine aminotransferase from Xanthomonas oryzae pv. oryzae (strain MAFF 311018).